The chain runs to 426 residues: Phosphomethylpyrimidine synthase (426 aa).

Substrate-binding positions include N65, M94, Y123, H162, 184-186 (SRG), 225-228 (DGMR), and E264. H268 contributes to the Zn(2+) binding site. Y291 is a binding site for substrate. H332 contacts Zn(2+). 3 residues coordinate [4Fe-4S] cluster: C408, C411, and C415.

Belongs to the ThiC family. It depends on [4Fe-4S] cluster as a cofactor.

It carries out the reaction 5-amino-1-(5-phospho-beta-D-ribosyl)imidazole + S-adenosyl-L-methionine = 4-amino-2-methyl-5-(phosphooxymethyl)pyrimidine + CO + 5'-deoxyadenosine + formate + L-methionine + 3 H(+). The protein operates within cofactor biosynthesis; thiamine diphosphate biosynthesis. Its function is as follows. Catalyzes the synthesis of the hydroxymethylpyrimidine phosphate (HMP-P) moiety of thiamine from aminoimidazole ribotide (AIR) in a radical S-adenosyl-L-methionine (SAM)-dependent reaction. The sequence is that of Phosphomethylpyrimidine synthase from Methanococcus maripaludis (strain C5 / ATCC BAA-1333).